A 266-amino-acid polypeptide reads, in one-letter code: Early E1A protein (266 aa).

The segment at 39–47 is interaction with RB1 in competition with E2F1; the sequence is PSLYELYDL. The segment at 75–145 is interaction with UBE2I; that stretch reads EGLFLPEPPV…AAAAADRERE (71 aa). The short motif at 98 to 102 is the PXLXP motif, interaction with host ZMYND11 element; that stretch reads PQLHP. Positions 107–111 match the LXCXE motif, interaction with host RB1 and TMEM173/STING motif; the sequence is LLCYE. A zinc finger spans residues 159–179; it reads CKSCEHHRNSTGNTDLMCSLC. The interval 195–226 is disordered; the sequence is NEPEPNSTLDGDERPSPPKLGSAVPEGVIKPV. A PXDLS motif, CTBP-binding motif is present at residues 255-259; sequence PVDLS. The Nuclear localization signal motif lies at 261–265; sequence KRPRC.

Belongs to the adenoviridae E1A protein family. As to quaternary structure, interacts with host UBE2I; this interaction interferes with polySUMOylation. Interacts with host RB1; this interaction induces the aberrant dissociation of RB1-E2F1 complex thereby disrupting the activity of RB1 and activating E2F1-regulated genes. Interacts with host ATF7; the interaction enhances ATF7-mediated viral transactivation activity which requires the zinc binding domains of both proteins. Isoform early E1A 32 kDa protein and isoform early E1A 26 kDa protein interact (via N-terminus) with CUL1 and E3 ubiquitin ligase RBX1; these interactions inhibit RBX1-CUL1-dependent elongation reaction of ubiquitin chains and attenuate ubiquitination of SCF(FBXW7) target proteins. Interacts (via PXLXP motif) with host ZMYND11/BS69 (via MYND-type zinc finger); this interaction inhibits E1A mediated transactivation. Interacts with host EP300; this interaction stimulates the acetylation of RB1 by recruiting EP300 and RB1 into a multimeric-protein complex. Interacts with host CTBP1 and CTBP2; this interaction seems to potentiate viral replication. Interacts with host DCAF7. Interacts with host DYRK1A. Interacts with host KPNA4; this interaction allows E1A import into the host nucleus. Interacts with host EP400; this interaction stabilizes MYC. Interacts with host TBP protein; this interaction probably disrupts the TBP-TATA complex. Interacts (via LXCXE motif) with host TMEM173/STING; this interaction impairs the ability of TMEM173/STING to sense cytosolic DNA and promote the production of type I interferon (IFN-alpha and IFN-beta). Interacts (via C-terminus) with host ZBED1/hDREF (via C-terminus); the interaction is direct.

It is found in the host nucleus. Plays a role in viral genome replication by driving entry of quiescent cells into the cell cycle. Stimulation of progression from G1 to S phase allows the virus to efficiently use the cellular DNA replicating machinery to achieve viral genome replication. E1A protein has both transforming and trans-activating activities. Induces the disassembly of the E2F1 transcription factor from RB1 by direct competition for the same binding site on RB1, with subsequent transcriptional activation of E2F1-regulated S-phase genes and of the E2 region of the adenoviral genome. Release of E2F1 leads to the ARF-mediated inhibition of MDM2 and causes TP53/p53 to accumulate because it is not targeted for degradation by MDM2-mediated ubiquitination anymore. This increase in TP53, in turn, would arrest the cell proliferation and direct its death but this effect is counteracted by the viral protein E1B-55K. Inactivation of the ability of RB1 to arrest the cell cycle is critical for cellular transformation, uncontrolled cellular growth and proliferation induced by viral infection. Interaction with RBX1 and CUL1 inhibits ubiquitination of the proteins targeted by SCF(FBXW7) ubiquitin ligase complex, and may be linked to unregulated host cell proliferation. The tumorigenesis-restraining activity of E1A may be related to the disruption of the host CtBP-CtIP complex through the CtBP binding motif. Interaction with host TMEM173/STING impairs the ability of TMEM173/STING to sense cytosolic DNA and promote the production of type I interferon (IFN-alpha and IFN-beta). Promotes the sumoylation of host ZBED1/hDREF with SUMO1. This Homo sapiens (Human) protein is Early E1A protein.